The sequence spans 588 residues: D-3-phosphoglycerate dehydrogenase 3, chloroplastic (588 aa).

The transit peptide at 1–38 directs the protein to the chloroplast; sequence MATSLNLSSIFSSSSRLVTTPSSVFPIRQRRRIILVTS. NAD(+) is bound by residues 195–196, D215, 274–276, and D300; these read KV and VAR. Residue R276 is part of the active site. Residue E305 is part of the active site. Residue H324 is the Proton donor of the active site. Position 324–327 (324–327) interacts with NAD(+); the sequence is HLGA. An ACT domain is found at 516–588; it reads VILCRQVDQP…AIEEFVFLKL (73 aa).

The protein belongs to the D-isomer specific 2-hydroxyacid dehydrogenase family. Expressed in aerial parts. Not detected in roots and meristematic tissue. Expressed in cotyledons, adult leaves, stigma and anther filaments. Detected in the embryo.

The protein localises to the plastid. The protein resides in the chloroplast. It carries out the reaction (2R)-3-phosphoglycerate + NAD(+) = 3-phosphooxypyruvate + NADH + H(+). The protein operates within amino-acid biosynthesis; L-serine biosynthesis; L-serine from 3-phospho-D-glycerate: step 1/3. With respect to regulation, partially inhibited by 1 mM serine. In terms of biological role, involved in the plastidial phosphorylated pathway of serine biosynthesis (PPSB). This chain is D-3-phosphoglycerate dehydrogenase 3, chloroplastic (PGDH3), found in Arabidopsis thaliana (Mouse-ear cress).